Here is a 265-residue protein sequence, read N- to C-terminus: Octanoyltransferase (265 aa).

A BPL/LPL catalytic domain is found at 35 to 254 (DEVPDTVLLL…HLRDVLENAE (220 aa)). Substrate is bound by residues 73–80 (RGGKITWH), 184–186 (AIG), and 197–199 (GFA). Cysteine 215 functions as the Acyl-thioester intermediate in the catalytic mechanism.

This sequence belongs to the LipB family.

Its subcellular location is the cytoplasm. The catalysed reaction is octanoyl-[ACP] + L-lysyl-[protein] = N(6)-octanoyl-L-lysyl-[protein] + holo-[ACP] + H(+). It participates in protein modification; protein lipoylation via endogenous pathway; protein N(6)-(lipoyl)lysine from octanoyl-[acyl-carrier-protein]: step 1/2. Catalyzes the transfer of endogenously produced octanoic acid from octanoyl-acyl-carrier-protein onto the lipoyl domains of lipoate-dependent enzymes. Lipoyl-ACP can also act as a substrate although octanoyl-ACP is likely to be the physiological substrate. This Streptomyces coelicolor (strain ATCC BAA-471 / A3(2) / M145) protein is Octanoyltransferase.